A 173-amino-acid polypeptide reads, in one-letter code: RNA pyrophosphohydrolase (173 aa).

In terms of domain architecture, Nudix hydrolase spans 6–149 (GFRANVGIII…KRDVYRKVMK (144 aa)). The Nudix box signature appears at 38–59 (GGVDDGETPEEAMYRELYEEVG).

It belongs to the Nudix hydrolase family. RppH subfamily. A divalent metal cation serves as cofactor.

Its function is as follows. Accelerates the degradation of transcripts by removing pyrophosphate from the 5'-end of triphosphorylated RNA, leading to a more labile monophosphorylated state that can stimulate subsequent ribonuclease cleavage. This is RNA pyrophosphohydrolase from Shewanella woodyi (strain ATCC 51908 / MS32).